A 244-amino-acid polypeptide reads, in one-letter code: rRNA adenine N-6-methyltransferase (244 aa).

The S-adenosyl-L-methionine site is built by N11, I13, G38, E59, D84, and N101.

It belongs to the class I-like SAM-binding methyltransferase superfamily. rRNA adenine N(6)-methyltransferase family.

It carries out the reaction adenosine(2085) in 23S rRNA + 2 S-adenosyl-L-methionine = N(6)-dimethyladenosine(2085) in 23S rRNA + 2 S-adenosyl-L-homocysteine + 2 H(+). This protein produces a dimethylation of the adenine residue at position 2085 in 23S rRNA, resulting in reduced affinity between ribosomes and macrolide-lincosamide-streptogramin B antibiotics. The chain is rRNA adenine N-6-methyltransferase (ermC') from Bacillus subtilis.